The primary structure comprises 463 residues: Hydrolase pyiE (463 aa).

The Nucleophile role is filled by Ser252. The tract at residues 350-373 is disordered; the sequence is KSDGSRANGKKSHSPTDGGGVESD.

It belongs to the AB hydrolase superfamily. FUS2 hydrolase family. As to quaternary structure, homodimer.

It participates in mycotoxin biosynthesis. In terms of biological role, hydrolyase; part of the gene cluster that mediates the biosynthesis of the mycotoxin pyrichalasin H, a tyrosine-derived cytochalasan that inhibits the growth of rice seedlings, but also inhibits lymphocyte capping and actin polymerization and alters cell morphology. Pyrichalasin H is indicated as the responsible agent for the genus-specific pathogenicity of M.grisea toward crabgrass. The first step in the pathway is catalyzed by the O-methyltransferase pyiA which methylates free tyrosine to generate the precursor O-methyltyrosine. The hybrid PKS-NRPS pyiS, assisted by the enoyl reductase pyiC, are responsible for fusion of the O-methyltyrosine precursor and the polyketide backbone. The polyketide synthase module (PKS) of pyiS is responsible for the synthesis of the polyketide backbone and the downstream nonribosomal peptide synthetase (NRPS) amidates the carboxyl end of the polyketide with the O-methyltyrosine precursor. As the NRPS A-domain demonstrates substrate tolerance, pyiS can also use phenylalanine, tyrosine and even para-chlorophenylalanine as amino acid precursor, which leads to the production of novel cytochalasans, including halogenated cytochalasans. Because pyiS lacks a designated enoylreductase (ER) domain, the required activity is provided the enoyl reductase pyiC. Reduction by the hydrolyase pyiE leads to 1,5-dihydropyrrolone, which is substrate for dehydration and intra-molecular Diels-Alder cyclization by the Diels-Alderase pyiF to yield the required isoindolone-fused macrocycle. The tailoring cytochrome P450 monooxygenases piyD and piyG catalyze the hydroxylation at C-18 and C-7, respectivily, whereas the short-chain dehydrogenase/reductase pyiH reduces the carbonyl at C-21 in preparation for the transfer of an acetyl group by the acetyltransferase pyiB. These 3 reactions whose order is not clear yet, lead to the production of O-methylpyrichalasin J, a deacetylated pyrichalasin H. Finally, pyiB to converts O-methylpyrichalasin J into the final product pyrichalasin H via acetylation of C-21. In Pyricularia grisea (Crabgrass-specific blast fungus), this protein is Hydrolase pyiE.